The following is a 398-amino-acid chain: Carboxyaminopropylagmatine dehydrogenase (398 aa).

The protein belongs to the saccharopine dehydrogenase family.

The catalysed reaction is N(1)-[(S)-3-amino-3-carboxypropyl]agmatine + NADP(+) + H2O = L-aspartate 4-semialdehyde + agmatine + NADPH + H(+). Its pathway is amine and polyamine biosynthesis; spermidine biosynthesis. Its function is as follows. Dehydrogenase involved in the biosynthesis of spermidine via the carboxyaminopropylagmatine (CAPA) pathway. Catalyzes the reductive condensation of agmatine and L-aspartate-beta-semialdehyde (ASA) into CAPA. Shows activity toward putrescine and 1,3-diaminopropane, but the catalytic efficiency is three to four orders of magnitude lower than that for agmatine. Cannot use cadaverine or spermidine. The polypeptide is Carboxyaminopropylagmatine dehydrogenase (Synechocystis sp. (strain ATCC 27184 / PCC 6803 / Kazusa)).